We begin with the raw amino-acid sequence, 189 residues long: MTTSAPRKTVNFITGNQNKLAEVQAILEPTIEVQSQKLDLIEVQGTLEEVTLDKVRRAAEQVEGPVLVEDTCLCFNALKGLPGPYIKWFMESIGHDGLNNLLAAYEDKSAQAVCTFGYSAGPGSEPILFQGITEGKIVPPRGPPFFGWDAIFEYEGQTYAEMDKAEKNKISHRGKALEKLQAWFAQREN.

14-19 (TGNQNK) serves as a coordination point for ITP. Residue Glu42 coordinates Mg(2+). Residues Lys54, 70-71 (DT), Lys87, 146-149 (FGWD), Lys167, and 172-173 (HR) each bind ITP.

It belongs to the HAM1 NTPase family. As to quaternary structure, homodimer. Requires Mg(2+) as cofactor. Mn(2+) serves as cofactor.

The protein resides in the cytoplasm. Its subcellular location is the nucleus. The enzyme catalyses ITP + H2O = IMP + diphosphate + H(+). It catalyses the reaction dITP + H2O = dIMP + diphosphate + H(+). It carries out the reaction XTP + H2O = XMP + diphosphate + H(+). Pyrophosphatase that hydrolyzes non-canonical purine nucleotides such as inosine triphosphate (ITP), deoxyinosine triphosphate (dITP) or xanthosine 5'-triphosphate (XTP) to their respective monophosphate derivatives. The enzyme does not distinguish between the deoxy- and ribose forms. Probably excludes non-canonical purines from RNA and DNA precursor pools, thus preventing their incorporation into RNA and DNA and avoiding chromosomal lesions. The polypeptide is Inosine triphosphate pyrophosphatase (Pyricularia oryzae (strain 70-15 / ATCC MYA-4617 / FGSC 8958) (Rice blast fungus)).